A 298-amino-acid polypeptide reads, in one-letter code: Ethylmalonyl-CoA decarboxylase (298 aa).

It belongs to the enoyl-CoA hydratase/isomerase family.

It is found in the cytoplasm. It localises to the cytosol. The catalysed reaction is (2S)-ethylmalonyl-CoA + H(+) = butanoyl-CoA + CO2. It catalyses the reaction (S)-methylmalonyl-CoA + H(+) = propanoyl-CoA + CO2. It carries out the reaction (2R)-ethylmalonyl-CoA + H(+) = butanoyl-CoA + CO2. Functionally, decarboxylates ethylmalonyl-CoA, a potentially toxic metabolite, to form butyryl-CoA, suggesting it might be involved in metabolite proofreading. Acts preferentially on (S)-ethylmalonyl-CoA but also has some activity on the (R)-isomer. Also has methylmalonyl-CoA decarboxylase activity at lower level. The sequence is that of Ethylmalonyl-CoA decarboxylase (ECHDC1) from Gallus gallus (Chicken).